We begin with the raw amino-acid sequence, 242 residues long: Pyridoxine 5'-phosphate synthase (242 aa).

Asparagine 9 contacts 3-amino-2-oxopropyl phosphate. 11-12 is a binding site for 1-deoxy-D-xylulose 5-phosphate; the sequence is DH. Arginine 20 contributes to the 3-amino-2-oxopropyl phosphate binding site. Histidine 45 acts as the Proton acceptor in catalysis. Residues arginine 47 and histidine 52 each contribute to the 1-deoxy-D-xylulose 5-phosphate site. Glutamate 72 (proton acceptor) is an active-site residue. Threonine 102 serves as a coordination point for 1-deoxy-D-xylulose 5-phosphate. The active-site Proton donor is histidine 193. Residues glycine 194 and 215–216 each bind 3-amino-2-oxopropyl phosphate; that span reads GH.

The protein belongs to the PNP synthase family. In terms of assembly, homooctamer; tetramer of dimers.

It is found in the cytoplasm. It carries out the reaction 3-amino-2-oxopropyl phosphate + 1-deoxy-D-xylulose 5-phosphate = pyridoxine 5'-phosphate + phosphate + 2 H2O + H(+). Its pathway is cofactor biosynthesis; pyridoxine 5'-phosphate biosynthesis; pyridoxine 5'-phosphate from D-erythrose 4-phosphate: step 5/5. Catalyzes the complicated ring closure reaction between the two acyclic compounds 1-deoxy-D-xylulose-5-phosphate (DXP) and 3-amino-2-oxopropyl phosphate (1-amino-acetone-3-phosphate or AAP) to form pyridoxine 5'-phosphate (PNP) and inorganic phosphate. This chain is Pyridoxine 5'-phosphate synthase, found in Idiomarina loihiensis (strain ATCC BAA-735 / DSM 15497 / L2-TR).